The chain runs to 751 residues: Semaphorin-3C (751 aa).

Positions 1–21 (MAFQAVCILVGVFVCSTYVKG) are cleaved as a signal peptide. Residues 28-511 (RVYLTFDELR…SNEGLAQVSL (484 aa)) form the Sema domain. A glycan (N-linked (GlcNAc...) asparagine) is linked at asparagine 81. A disulfide bridge links cysteine 101 with cysteine 112. N-linked (GlcNAc...) asparagine glycosylation occurs at asparagine 123. 3 disulfide bridges follow: cysteine 130–cysteine 139, cysteine 266–cysteine 378, and cysteine 290–cysteine 338. Asparagine 268 is a glycosylation site (N-linked (GlcNAc...) asparagine). Asparagine 465 carries N-linked (GlcNAc...) asparagine glycosylation. A disulfide bridge connects residues cysteine 514 and cysteine 532. One can recognise an Ig-like C2-type domain in the interval 571-655 (AYRNAAEIVQ…TENSFKQTIA (85 aa)). Residues asparagine 585 and asparagine 586 are each glycosylated (N-linked (GlcNAc...) asparagine). The cysteines at positions 592 and 643 are disulfide-linked. The span at 712-731 (TRQQHQQGEESQKMRGDYGK) shows a compositional bias: basic and acidic residues. A disordered region spans residues 712-751 (TRQQHQQGEESQKMRGDYGKLKALINSRKSRNRRNQLPES).

This sequence belongs to the semaphorin family. As to quaternary structure, interacts with PLXND1.

It localises to the secreted. Binds to plexin family members and plays an important role in the regulation of developmental processes. Required for normal cardiovascular development during embryogenesis. Functions as attractant for growing axons, and thereby plays an important role in axon growth and axon guidance. In Bos taurus (Bovine), this protein is Semaphorin-3C (SEMA3C).